A 219-amino-acid chain; its full sequence is Proteasome subunit beta (219 aa).

The propeptide at 1–14 (MISGSEYHKEYMKG) is removed in mature form; by autocatalysis. T15 (nucleophile) is an active-site residue.

Belongs to the peptidase T1B family. As to quaternary structure, the 20S proteasome core is composed of 14 alpha and 14 beta subunits that assemble into four stacked heptameric rings, resulting in a barrel-shaped structure. The two inner rings, each composed of seven catalytic beta subunits, are sandwiched by two outer rings, each composed of seven alpha subunits. The catalytic chamber with the active sites is on the inside of the barrel. Has a gated structure, the ends of the cylinder being occluded by the N-termini of the alpha-subunits. Is capped at one or both ends by the proteasome regulatory ATPase, PAN.

It localises to the cytoplasm. The enzyme catalyses Cleavage of peptide bonds with very broad specificity.. Its activity is regulated as follows. The formation of the proteasomal ATPase PAN-20S proteasome complex, via the docking of the C-termini of PAN into the intersubunit pockets in the alpha-rings, triggers opening of the gate for substrate entry. Interconversion between the open-gate and close-gate conformations leads to a dynamic regulation of the 20S proteasome proteolysis activity. Component of the proteasome core, a large protease complex with broad specificity involved in protein degradation. This is Proteasome subunit beta from Methanococcus vannielii (strain ATCC 35089 / DSM 1224 / JCM 13029 / OCM 148 / SB).